Consider the following 435-residue polypeptide: Enolase (435 aa).

Gln163 serves as a coordination point for (2R)-2-phosphoglycerate. Glu205 (proton donor) is an active-site residue. Residues Asp243, Glu292, and Asp319 each contribute to the Mg(2+) site. (2R)-2-phosphoglycerate is bound by residues Lys344, Arg373, Ser374, and Lys395. Residue Lys344 is the Proton acceptor of the active site.

This sequence belongs to the enolase family. Mg(2+) serves as cofactor.

The protein localises to the cytoplasm. It is found in the secreted. It localises to the cell surface. It carries out the reaction (2R)-2-phosphoglycerate = phosphoenolpyruvate + H2O. It participates in carbohydrate degradation; glycolysis; pyruvate from D-glyceraldehyde 3-phosphate: step 4/5. In terms of biological role, catalyzes the reversible conversion of 2-phosphoglycerate (2-PG) into phosphoenolpyruvate (PEP). It is essential for the degradation of carbohydrates via glycolysis. This is Enolase from Streptococcus agalactiae serotype Ia (strain ATCC 27591 / A909 / CDC SS700).